The chain runs to 425 residues: Phosphomethylpyrimidine synthase (425 aa).

Substrate-binding positions include N66, M95, Y124, H159, 181 to 183, 222 to 225, and E261; these read SRG and DAYR. Residue H265 participates in Zn(2+) binding. Y288 contacts substrate. H329 is a Zn(2+) binding site. [4Fe-4S] cluster is bound by residues C406, C409, and C413.

It belongs to the ThiC family. The cofactor is [4Fe-4S] cluster.

The enzyme catalyses 5-amino-1-(5-phospho-beta-D-ribosyl)imidazole + S-adenosyl-L-methionine = 4-amino-2-methyl-5-(phosphooxymethyl)pyrimidine + CO + 5'-deoxyadenosine + formate + L-methionine + 3 H(+). It functions in the pathway cofactor biosynthesis; thiamine diphosphate biosynthesis. Functionally, catalyzes the synthesis of the hydroxymethylpyrimidine phosphate (HMP-P) moiety of thiamine from aminoimidazole ribotide (AIR) in a radical S-adenosyl-L-methionine (SAM)-dependent reaction. The chain is Phosphomethylpyrimidine synthase from Archaeoglobus fulgidus (strain ATCC 49558 / DSM 4304 / JCM 9628 / NBRC 100126 / VC-16).